A 264-amino-acid polypeptide reads, in one-letter code: 3-methyl-2-oxobutanoate hydroxymethyltransferase (264 aa).

Mg(2+)-binding residues include Asp-45 and Asp-84. Residues 45–46, Asp-84, and Lys-112 each bind 3-methyl-2-oxobutanoate; that span reads DS. Glu-114 is a Mg(2+) binding site. The Proton acceptor role is filled by Glu-181.

It belongs to the PanB family. As to quaternary structure, homodecamer; pentamer of dimers. Mg(2+) serves as cofactor.

It localises to the cytoplasm. It catalyses the reaction 3-methyl-2-oxobutanoate + (6R)-5,10-methylene-5,6,7,8-tetrahydrofolate + H2O = 2-dehydropantoate + (6S)-5,6,7,8-tetrahydrofolate. It functions in the pathway cofactor biosynthesis; (R)-pantothenate biosynthesis; (R)-pantoate from 3-methyl-2-oxobutanoate: step 1/2. Catalyzes the reversible reaction in which hydroxymethyl group from 5,10-methylenetetrahydrofolate is transferred onto alpha-ketoisovalerate to form ketopantoate. This chain is 3-methyl-2-oxobutanoate hydroxymethyltransferase, found in Shewanella frigidimarina (strain NCIMB 400).